The primary structure comprises 76 residues: Small proline-rich protein 2I (76 aa).

3 repeat units span residues 21-29 (KKCPEPCPP), 30-38 (PQCPEPCPP), and 39-47 (PKCPEPCPE). A 3 X 9 AA approximate tandem repeats region spans residues 21–47 (KKCPEPCPPPQCPEPCPPPKCPEPCPE). The span at 40–53 (KCPEPCPESCPPPS) shows a compositional bias: pro residues. The disordered stretch occupies residues 40–76 (KCPEPCPESCPPPSYQQKCPPVQPPPPCQQKCPPKSK).

The protein belongs to the cornifin (SPRR) family. In terms of tissue distribution, not expressed in uterus.

The protein resides in the cytoplasm. Functionally, cross-linked envelope protein of keratinocytes. It is a keratinocyte protein that first appears in the cell cytosol, but ultimately becomes cross-linked to membrane proteins by transglutaminase. All that results in the formation of an insoluble envelope beneath the plasma membrane. In Mus musculus (Mouse), this protein is Small proline-rich protein 2I (Sprr2i).